We begin with the raw amino-acid sequence, 202 residues long: Adenylate kinase (202 aa).

12-20 (GVPGVGKTT) is an ATP binding site.

Belongs to the archaeal adenylate kinase family.

It localises to the cytoplasm. It carries out the reaction AMP + ATP = 2 ADP. The polypeptide is Adenylate kinase (adkA) (Aeropyrum pernix (strain ATCC 700893 / DSM 11879 / JCM 9820 / NBRC 100138 / K1)).